The following is a 461-amino-acid chain: Aspartyl/glutamyl-tRNA(Asn/Gln) amidotransferase subunit B (461 aa).

Belongs to the GatB/GatE family. GatB subfamily. As to quaternary structure, heterotrimer of A, B and C subunits.

It catalyses the reaction L-glutamyl-tRNA(Gln) + L-glutamine + ATP + H2O = L-glutaminyl-tRNA(Gln) + L-glutamate + ADP + phosphate + H(+). It carries out the reaction L-aspartyl-tRNA(Asn) + L-glutamine + ATP + H2O = L-asparaginyl-tRNA(Asn) + L-glutamate + ADP + phosphate + 2 H(+). In terms of biological role, allows the formation of correctly charged Asn-tRNA(Asn) or Gln-tRNA(Gln) through the transamidation of misacylated Asp-tRNA(Asn) or Glu-tRNA(Gln) in organisms which lack either or both of asparaginyl-tRNA or glutaminyl-tRNA synthetases. The reaction takes place in the presence of glutamine and ATP through an activated phospho-Asp-tRNA(Asn) or phospho-Glu-tRNA(Gln). In Methanopyrus kandleri (strain AV19 / DSM 6324 / JCM 9639 / NBRC 100938), this protein is Aspartyl/glutamyl-tRNA(Asn/Gln) amidotransferase subunit B.